We begin with the raw amino-acid sequence, 589 residues long: Aspartate--tRNA ligase (589 aa).

Glutamate 174 is an L-aspartate binding site. The interval 198 to 201 (QLFK) is aspartate. Arginine 220 contributes to the L-aspartate binding site. Residues 220-222 (RDE) and glutamine 229 each bind ATP. Histidine 448 contacts L-aspartate. Glutamate 483 serves as a coordination point for ATP. An L-aspartate-binding site is contributed by arginine 490. 535 to 538 (GIDR) serves as a coordination point for ATP.

This sequence belongs to the class-II aminoacyl-tRNA synthetase family. Type 1 subfamily. In terms of assembly, homodimer.

It is found in the cytoplasm. It catalyses the reaction tRNA(Asp) + L-aspartate + ATP = L-aspartyl-tRNA(Asp) + AMP + diphosphate. Functionally, catalyzes the attachment of L-aspartate to tRNA(Asp) in a two-step reaction: L-aspartate is first activated by ATP to form Asp-AMP and then transferred to the acceptor end of tRNA(Asp). The sequence is that of Aspartate--tRNA ligase from Xylella fastidiosa (strain M12).